The chain runs to 295 residues: G1/S-specific cyclin-D1 (295 aa).

One can recognise a Cyclin N-terminal domain in the interval 28–152 (LRAMLKAEET…LLVNKLKWNL (125 aa)). The segment at 264-295 (QQSLDPKAAEEEEEEEEADLACTPTDVRDVNI) is disordered. Lysine 270 is covalently cross-linked (Glycyl lysine isopeptide (Lys-Gly) (interchain with G-Cter in ubiquitin)). Residues 273 to 282 (EEEEEEEEAD) show a composition bias toward acidic residues. Threonine 286 bears the Phosphothreonine mark.

It belongs to the cyclin family. Cyclin D subfamily. As to quaternary structure, interacts with either CDK4 or CDK6 protein kinase to form a serine/threonine kinase holoenzyme complex. The cyclin subunit imparts substrate specificity to the complex. Component of the ternary complex CCND1/CDK4/CDKN1B required for nuclear translocation and modulation of CDK4-mediated kinase activity. Interacts directly with CDKN1B. Can form similar complexes with either CDKN1A or CDKN2A. Interacts with UHRF2; the interaction ubiquitinates CCND1 and appears to occur independently of phosphorylation. Interacts with USP2. Interacts (via cyclin N-terminal domain) with INSM1 (via N-terminal region); the interaction competes with the binding of CCND1 to CDK4 during cell cycle progression and inhibits CDK4 activity. Interacts with CDK4; the interaction is prevented with the binding of CCND1 to INSM1 during cell cycle progression. Phosphorylation at Thr-286 by MAP kinases is required for ubiquitination and degradation by the DCX(AMBRA1) complex. It also plays an essential role for recognition by the FBXO31 component of SCF (SKP1-cullin-F-box) protein ligase complex following DNA damage. In terms of processing, ubiquitinated at Lys-270 by the DCX(AMBRA1) complex during the transition from G1 to S cell phase, leading to its degradation: ubiquitination is dependent on Thr-286 phosphorylation. The DCX(AMBRA1) complex represents the major regulator of CCND1 stability during the G1/S transition. Also ubiquitinated by the SCF(FBXO4) and Cul7-RING(FBXW8) ubiquitin-protein ligase complexes. Following DNA damage it is ubiquitinated by the SCF(FBXO31) protein ligase complex. SCF(FBXO31) ubiquitination is dependent on Thr-286 phosphorylation. Ubiquitinated also by UHRF2 apparently in a phosphorylation-independent manner. Ubiquitination leads to its degradation and G1 arrest. Deubiquitinated by USP2; leading to its stabilization.

The protein resides in the nucleus. It is found in the cytoplasm. The protein localises to the nucleus membrane. Functionally, regulatory component of the cyclin D1-CDK4 (DC) complex that phosphorylates and inhibits members of the retinoblastoma (RB) protein family including RB1 and regulates the cell-cycle during G(1)/S transition. Phosphorylation of RB1 allows dissociation of the transcription factor E2F from the RB/E2F complex and the subsequent transcription of E2F target genes which are responsible for the progression through the G(1) phase. Hypophosphorylates RB1 in early G(1) phase. Cyclin D-CDK4 complexes are major integrators of various mitogenenic and antimitogenic signals. Also a substrate for SMAD3, phosphorylating SMAD3 in a cell-cycle-dependent manner and repressing its transcriptional activity. Component of the ternary complex, cyclin D1/CDK4/CDKN1B, required for nuclear translocation and activity of the cyclin D-CDK4 complex. Exhibits transcriptional corepressor activity with INSM1 on the NEUROD1 and INS promoters in a cell cycle-independent manner. This chain is G1/S-specific cyclin-D1 (CCND1), found in Canis lupus familiaris (Dog).